We begin with the raw amino-acid sequence, 325 residues long: DNA-directed RNA polymerase subunit alpha (325 aa).

Residues 1-238 (MSLKSLLKGF…EHLTVFINFE (238 aa)) form an alpha N-terminal domain (alpha-NTD) region. The segment at 255-325 (LKASLSKHVE…LGLSFGMRDF (71 aa)) is alpha C-terminal domain (alpha-CTD).

This sequence belongs to the RNA polymerase alpha chain family. In terms of assembly, homodimer. The RNAP catalytic core consists of 2 alpha, 1 beta, 1 beta' and 1 omega subunit. When a sigma factor is associated with the core the holoenzyme is formed, which can initiate transcription.

It carries out the reaction RNA(n) + a ribonucleoside 5'-triphosphate = RNA(n+1) + diphosphate. Its function is as follows. DNA-dependent RNA polymerase catalyzes the transcription of DNA into RNA using the four ribonucleoside triphosphates as substrates. This is DNA-directed RNA polymerase subunit alpha from Leptospira interrogans serogroup Icterohaemorrhagiae serovar copenhageni (strain Fiocruz L1-130).